The sequence spans 175 residues: Rubredoxin-1 (175 aa).

2 consecutive Rubredoxin-like domains span residues 1-53 and 119-170; these read MARY…FVLI and FLKW…YVLY. 8 residues coordinate Fe cation: C6, C9, C39, C42, C124, C127, C157, and C160.

This sequence belongs to the rubredoxin family. The cofactor is Fe(3+).

Its subcellular location is the cytoplasm. The protein operates within hydrocarbon metabolism; alkane degradation. Its function is as follows. Involved in the hydrocarbon hydroxylating system, which transfers electrons from NADH to rubredoxin reductase and then through rubredoxin to alkane 1 monooxygenase. This Pseudomonas putida (Arthrobacter siderocapsulatus) protein is Rubredoxin-1 (alkG).